Here is a 557-residue protein sequence, read N- to C-terminus: Formate--tetrahydrofolate ligase (557 aa).

Residue 65–72 (TPAGEGKT) coordinates ATP.

The protein belongs to the formate--tetrahydrofolate ligase family.

The enzyme catalyses (6S)-5,6,7,8-tetrahydrofolate + formate + ATP = (6R)-10-formyltetrahydrofolate + ADP + phosphate. The protein operates within one-carbon metabolism; tetrahydrofolate interconversion. The polypeptide is Formate--tetrahydrofolate ligase (Methylococcus capsulatus (strain ATCC 33009 / NCIMB 11132 / Bath)).